Here is a 294-residue protein sequence, read N- to C-terminus: Cell division protein ZipA (294 aa).

A topological domain (periplasmic) is located at residue M1. Residues 2–22 traverse the membrane as a helical segment; that stretch reads EIGLREWLILIGIIVIAGILF. Residues 23-294 are Cytoplasmic-facing; sequence DGWRRMRGGK…FERRALTQKR (272 aa). 2 disordered regions span residues 64–111 and 126–146; these read THKE…GDLN and KDDF…STPV. Positions 82–91 are enriched in basic and acidic residues; it reads ARERERDPKP.

This sequence belongs to the ZipA family. In terms of assembly, interacts with FtsZ via their C-terminal domains.

It localises to the cell inner membrane. Its function is as follows. Essential cell division protein that stabilizes the FtsZ protofilaments by cross-linking them and that serves as a cytoplasmic membrane anchor for the Z ring. Also required for the recruitment to the septal ring of downstream cell division proteins. In Pseudomonas entomophila (strain L48), this protein is Cell division protein ZipA.